The sequence spans 140 residues: ATP synthase epsilon chain (140 aa).

The protein belongs to the ATPase epsilon chain family. As to quaternary structure, F-type ATPases have 2 components, CF(1) - the catalytic core - and CF(0) - the membrane proton channel. CF(1) has five subunits: alpha(3), beta(3), gamma(1), delta(1), epsilon(1). CF(0) has three main subunits: a, b and c.

It localises to the cell inner membrane. Functionally, produces ATP from ADP in the presence of a proton gradient across the membrane. This chain is ATP synthase epsilon chain, found in Bordetella bronchiseptica (strain ATCC BAA-588 / NCTC 13252 / RB50) (Alcaligenes bronchisepticus).